The primary structure comprises 281 residues: Tryptophan synthase alpha chain (281 aa).

Residues Glu-49 and Asp-60 each act as proton acceptor in the active site.

It belongs to the TrpA family. Tetramer of two alpha and two beta chains.

It catalyses the reaction (1S,2R)-1-C-(indol-3-yl)glycerol 3-phosphate + L-serine = D-glyceraldehyde 3-phosphate + L-tryptophan + H2O. It participates in amino-acid biosynthesis; L-tryptophan biosynthesis; L-tryptophan from chorismate: step 5/5. Its function is as follows. The alpha subunit is responsible for the aldol cleavage of indoleglycerol phosphate to indole and glyceraldehyde 3-phosphate. The sequence is that of Tryptophan synthase alpha chain from Methanocaldococcus jannaschii (strain ATCC 43067 / DSM 2661 / JAL-1 / JCM 10045 / NBRC 100440) (Methanococcus jannaschii).